The primary structure comprises 356 residues: Galectin-9C (356 aa).

The Galectin 1 domain occupies 17-148 (FSGTIQGGLQ…SVQLSYISFQ (132 aa)). 82-88 (WGPEERK) lines the a beta-D-galactoside pocket. Residues 170-190 (FPPRPRGRRQKPPSVRPANPA) are disordered. Positions 228 to 356 (FITTIPGGLY…GDIQLTHVQT (129 aa)) constitute a Galectin 2 domain. 288 to 294 (WGSEERS) contacts a beta-D-galactoside.

In terms of biological role, binds galactosides. In Homo sapiens (Human), this protein is Galectin-9C (LGALS9C).